Here is an 89-residue protein sequence, read N- to C-terminus: MALSKDEKAATLKEFGLHETDTGSPEAQVALLSARINQLTEHLKDHKHDHHSRRGLLLLVGRRKGLLKYLASTDIERYRSLIERLGLRR.

This sequence belongs to the universal ribosomal protein uS15 family. Part of the 30S ribosomal subunit. Forms a bridge to the 50S subunit in the 70S ribosome, contacting the 23S rRNA.

Functionally, one of the primary rRNA binding proteins, it binds directly to 16S rRNA where it helps nucleate assembly of the platform of the 30S subunit by binding and bridging several RNA helices of the 16S rRNA. Its function is as follows. Forms an intersubunit bridge (bridge B4) with the 23S rRNA of the 50S subunit in the ribosome. The chain is Small ribosomal subunit protein uS15 from Corynebacterium urealyticum (strain ATCC 43042 / DSM 7109).